We begin with the raw amino-acid sequence, 531 residues long: Acid-sensing ion channel 3 (531 aa).

Over 1–43 the chain is Cytoplasmic; sequence MKPTSGPEEARRPASDIRVFASNCSMHGLGHVFGPGSLSLRRG. The chain crosses the membrane as a helical span at residues 44-61; it reads MWAAAVVLSVATFLYQVA. Topologically, residues 62–441 are extracellular; sequence ERVRYYREFH…SELLGDIGGQ (380 aa). Disulfide bonds link Cys-92/Cys-186, Cys-164/Cys-171, Cys-282/Cys-370, Cys-315/Cys-366, Cys-319/Cys-364, Cys-328/Cys-350, and Cys-330/Cys-342. N-linked (GlcNAc...) asparagine glycosylation is present at Asn-175. The segment at 285–307 is disordered; the sequence is ASLNPNYEPEPSDPLGSPSPSPS. Asn-398 is a glycosylation site (N-linked (GlcNAc...) asparagine). The chain crosses the membrane as a helical span at residues 442–460; the sequence is MGLFIGASLLTILEILDYL. The GAS motif; ion selectivity filter signature appears at 447–449; that stretch reads GAS. Residues 461-531 lie on the Cytoplasmic side of the membrane; sequence CEVFRDKVLG…HRTCYLVTQL (71 aa). A PDZ-binding motif is present at residues 528-531; it reads VTQL.

The protein belongs to the amiloride-sensitive sodium channel (TC 1.A.6) family. ASIC3 subfamily. Can form homotrimeric channels. Heterotrimer; forms functional heterotrimers producing channel with different properties. Forms heterotrimers with ASIC2; gives rise to a biphasic current with a sustained current which discriminates poorly between Na(+) and K(+). Interacts with STOM; inhibits ASIC3 acid-evoked current. Interacts with LIN7B (via PDZ domain); increases ASIC3 expression at the plasma membrane. Interacts with MAGI1 (via PDZ domain); probably regulates ASIC3. Interacts with GOPC (via PDZ domain); probably regulates ASIC3. Interacts with DLG4 (via PDZ domain); reduces ASIC3 expression at the plasma membrane. As to expression, expressed by sensory neurons. Strongly expressed in brain, spinal cord, lung, lymph nodes, kidney, pituitary, heart and testis.

It localises to the cell membrane. The protein resides in the cytoplasm. The catalysed reaction is Na(+)(in) = Na(+)(out). It catalyses the reaction K(+)(in) = K(+)(out). It carries out the reaction Ca(2+)(in) = Ca(2+)(out). Inhibited by the diuretic drug amiloride. Inhibited by the diuretic drug triamterene. Potentiated by the vertebrate neuropeptide FF (NPFF) and the related FMRFamide. Specifically and reversibly inhibited by the a sea anemone toxin APETx2. Its function is as follows. Forms pH-gated heterotrimeric sodium channels that act as postsynaptic excitatory receptors in the nervous system. Upon extracellular acidification, these channels generate a biphasic current with a fast inactivating and a slow sustained phase. ASIC3 is more sensitive to protons and gates between closed, open, and desensitized states faster than other ASICs. Displays high selectivity for sodium ions but can also permit the permeation of other cations. As a neuronal acid sensor, probably contributes to mechanoreception, acid nociception, and heat nociception. By forming heterotrimeric channels with ASIC2, generates a biphasic current with a fast inactivating and a slow sustained phase, which in sensory neurons is proposed to mediate the pain induced by acidosis that occurs in ischemic, damaged or inflamed tissues. The polypeptide is Acid-sensing ion channel 3 (Homo sapiens (Human)).